Here is a 320-residue protein sequence, read N- to C-terminus: Putative thiosulfate sulfurtransferase 2 (320 aa).

2 Rhodanese domains span residues 18–125 (HAPK…PLSS) and 154–267 (AINV…HACP). Residue Cys233 is the Cysteine persulfide intermediate of the active site. Arg238 is a substrate binding site.

It catalyses the reaction thiosulfate + hydrogen cyanide = thiocyanate + sulfite + 2 H(+). In terms of biological role, may be a sulfotransferase involved in the formation of thiosulfate. This Mycobacterium bovis (strain ATCC BAA-935 / AF2122/97) protein is Putative thiosulfate sulfurtransferase 2 (cysA2).